We begin with the raw amino-acid sequence, 162 residues long: Peroxiredoxin-2C (162 aa).

The 159-residue stretch at 4 to 162 folds into the Thioredoxin domain; that stretch reads ITVGDVVPDG…SSAEDILKAL (159 aa). Cys-51 (cysteine sulfenic acid (-SOH) intermediate) is an active-site residue.

It belongs to the peroxiredoxin family. Prx5 subfamily. In terms of assembly, monomer. In terms of tissue distribution, highly expressed in buds and flowers. Slightly expressed in green tissues. Also detected in pollen.

It localises to the cytoplasm. It carries out the reaction [glutaredoxin]-dithiol + a hydroperoxide = [glutaredoxin]-disulfide + an alcohol + H2O. Thiol-specific peroxidase that catalyzes the reduction of hydrogen peroxide and organic hydroperoxides to water and alcohols, respectively. Plays a role in cell protection against oxidative stress by detoxifying peroxides and as sensor of hydrogen peroxide-mediated signaling events. The chain is Peroxiredoxin-2C (PRXIIC) from Arabidopsis thaliana (Mouse-ear cress).